The chain runs to 470 residues: Proline--tRNA ligase (470 aa).

This sequence belongs to the class-II aminoacyl-tRNA synthetase family. ProS type 3 subfamily. In terms of assembly, homodimer.

Its subcellular location is the cytoplasm. It carries out the reaction tRNA(Pro) + L-proline + ATP = L-prolyl-tRNA(Pro) + AMP + diphosphate. In terms of biological role, catalyzes the attachment of proline to tRNA(Pro) in a two-step reaction: proline is first activated by ATP to form Pro-AMP and then transferred to the acceptor end of tRNA(Pro). The chain is Proline--tRNA ligase from Malacoplasma penetrans (strain HF-2) (Mycoplasma penetrans).